Reading from the N-terminus, the 316-residue chain is Glutathione synthetase (316 aa).

Residues 125–310 (KLFTAWFSDL…ITGMLMDAIE (186 aa)) form the ATP-grasp domain. Position 151–207 (151–207 (WEKHSDIILKPLDGMGGASIFRVKEGDPNLGVIAETLTEHGTRYCMAQNYLPAIKDG)) interacts with ATP. Positions 281 and 283 each coordinate Mg(2+).

The protein belongs to the prokaryotic GSH synthase family. Homotetramer. Requires Mg(2+) as cofactor. It depends on Mn(2+) as a cofactor.

It catalyses the reaction gamma-L-glutamyl-L-cysteine + glycine + ATP = glutathione + ADP + phosphate + H(+). The protein operates within sulfur metabolism; glutathione biosynthesis; glutathione from L-cysteine and L-glutamate: step 2/2. With respect to regulation, inhibited by 7,8-dihydrofolate, methotrexate and trimethoprim. The protein is Glutathione synthetase (gshB) of Escherichia coli (strain K12).